The chain runs to 245 residues: Pyridoxine 5'-phosphate synthase (245 aa).

3-amino-2-oxopropyl phosphate is bound by residues N8 and R19. The Proton acceptor role is filled by H44. Residues R46 and H51 each contribute to the 1-deoxy-D-xylulose 5-phosphate site. Catalysis depends on E76, which acts as the Proton acceptor. T106 contributes to the 1-deoxy-D-xylulose 5-phosphate binding site. The Proton donor role is filled by H198. Residues D199 and 221-222 (GH) contribute to the 3-amino-2-oxopropyl phosphate site.

It belongs to the PNP synthase family. As to quaternary structure, homooctamer; tetramer of dimers.

The protein resides in the cytoplasm. The enzyme catalyses 3-amino-2-oxopropyl phosphate + 1-deoxy-D-xylulose 5-phosphate = pyridoxine 5'-phosphate + phosphate + 2 H2O + H(+). It functions in the pathway cofactor biosynthesis; pyridoxine 5'-phosphate biosynthesis; pyridoxine 5'-phosphate from D-erythrose 4-phosphate: step 5/5. Its function is as follows. Catalyzes the complicated ring closure reaction between the two acyclic compounds 1-deoxy-D-xylulose-5-phosphate (DXP) and 3-amino-2-oxopropyl phosphate (1-amino-acetone-3-phosphate or AAP) to form pyridoxine 5'-phosphate (PNP) and inorganic phosphate. The chain is Pyridoxine 5'-phosphate synthase from Brucella anthropi (strain ATCC 49188 / DSM 6882 / CCUG 24695 / JCM 21032 / LMG 3331 / NBRC 15819 / NCTC 12168 / Alc 37) (Ochrobactrum anthropi).